The following is a 137-amino-acid chain: Nucleoside diphosphate kinase (137 aa).

Residues Lys-10, Phe-58, Arg-86, Thr-92, Arg-103, and Asn-113 each contribute to the ATP site. His-116 (pros-phosphohistidine intermediate) is an active-site residue.

The protein belongs to the NDK family. As to quaternary structure, homotetramer. The cofactor is Mg(2+).

The protein localises to the cytoplasm. The catalysed reaction is a 2'-deoxyribonucleoside 5'-diphosphate + ATP = a 2'-deoxyribonucleoside 5'-triphosphate + ADP. It carries out the reaction a ribonucleoside 5'-diphosphate + ATP = a ribonucleoside 5'-triphosphate + ADP. Its function is as follows. Major role in the synthesis of nucleoside triphosphates other than ATP. The ATP gamma phosphate is transferred to the NDP beta phosphate via a ping-pong mechanism, using a phosphorylated active-site intermediate. This Helicobacter pylori (strain Shi470) protein is Nucleoside diphosphate kinase.